The sequence spans 177 residues: Anti-apoptotic protein NR13 (177 aa).

Positions 75-94 match the BH1 motif; sequence LETDGGLNWGRLLALVVFAG. Residues 86-106 form a helical membrane-spanning segment; that stretch reads LLALVVFAGTLAAALAESACE. The BH2 signature appears at 126–141; that stretch reads EWMEEHGGWDGFCRFF. Residues 156-176 traverse the membrane as a helical segment; sequence SNAIMAAAGFGIAGLAFLLVV.

This sequence belongs to the Bcl-2 family. In terms of assembly, interacts with BAX. In terms of tissue distribution, mainly expressed in neural and muscular tissues.

The protein resides in the cell membrane. Shows anti-apoptotic properties. Counteract the pro-apoptotic activity of BAX. The polypeptide is Anti-apoptotic protein NR13 (NR13) (Coturnix japonica (Japanese quail)).